The following is a 122-amino-acid chain: Large ribosomal subunit protein uL14 (122 aa).

Belongs to the universal ribosomal protein uL14 family. Part of the 50S ribosomal subunit. Forms a cluster with proteins L3 and L19. In the 70S ribosome, L14 and L19 interact and together make contacts with the 16S rRNA in bridges B5 and B8.

Functionally, binds to 23S rRNA. Forms part of two intersubunit bridges in the 70S ribosome. This is Large ribosomal subunit protein uL14 from Chlorobium limicola (strain DSM 245 / NBRC 103803 / 6330).